The sequence spans 391 residues: Chorismate synthase (391 aa).

Position 48 (R48) interacts with NADP(+). FMN-binding positions include 126–128 (RAS), G286, 301–305 (KPTSS), and R328.

This sequence belongs to the chorismate synthase family. The cofactor is FMNH2.

It catalyses the reaction 5-O-(1-carboxyvinyl)-3-phosphoshikimate = chorismate + phosphate. It participates in metabolic intermediate biosynthesis; chorismate biosynthesis; chorismate from D-erythrose 4-phosphate and phosphoenolpyruvate: step 7/7. Functionally, catalyzes the anti-1,4-elimination of the C-3 phosphate and the C-6 proR hydrogen from 5-enolpyruvylshikimate-3-phosphate (EPSP) to yield chorismate, which is the branch point compound that serves as the starting substrate for the three terminal pathways of aromatic amino acid biosynthesis. This reaction introduces a second double bond into the aromatic ring system. The protein is Chorismate synthase of Saccharolobus islandicus (strain M.16.27) (Sulfolobus islandicus).